Here is a 314-residue protein sequence, read N- to C-terminus: DNA-directed RNA polymerase subunit alpha (314 aa).

Positions 1–228 (MIEIEKPKIE…EHLNIFVGLT (228 aa)) are alpha N-terminal domain (alpha-NTD). The interval 245 to 314 (KEKVLEMTIE…ELGLGLRKDD (70 aa)) is alpha C-terminal domain (alpha-CTD).

This sequence belongs to the RNA polymerase alpha chain family. In terms of assembly, homodimer. The RNAP catalytic core consists of 2 alpha, 1 beta, 1 beta' and 1 omega subunit. When a sigma factor is associated with the core the holoenzyme is formed, which can initiate transcription.

It carries out the reaction RNA(n) + a ribonucleoside 5'-triphosphate = RNA(n+1) + diphosphate. In terms of biological role, DNA-dependent RNA polymerase catalyzes the transcription of DNA into RNA using the four ribonucleoside triphosphates as substrates. The polypeptide is DNA-directed RNA polymerase subunit alpha (Bacillus licheniformis (strain ATCC 14580 / DSM 13 / JCM 2505 / CCUG 7422 / NBRC 12200 / NCIMB 9375 / NCTC 10341 / NRRL NRS-1264 / Gibson 46)).